The primary structure comprises 405 residues: S-arrestin (405 aa).

A Phosphothreonine modification is found at threonine 234.

This sequence belongs to the arrestin family. As to quaternary structure, monomer. Homodimer. Homotetramer. Interacts with RHO (via the phosphorylated C-terminus).

It is found in the cell projection. Its subcellular location is the cilium. It localises to the photoreceptor outer segment. The protein resides in the membrane. In terms of biological role, binds to photoactivated, phosphorylated RHO and terminates RHO signaling via G-proteins by competing with G-proteins for the same binding site on RHO. May play a role in preventing light-dependent degeneration of retinal photoreceptor cells. This is S-arrestin (SAG) from Canis lupus familiaris (Dog).